Here is a 154-residue protein sequence, read N- to C-terminus: Transcriptional repressor NrdR (154 aa).

A zinc finger spans residues 3–34 (CPFCGANDTKVIDSRLVAEGEQVRRRRECVAC). One can recognise an ATP-cone domain in the interval 49–139 (PRLIKQDGTR…VYRRFQDLDE (91 aa)).

Belongs to the NrdR family. Requires Zn(2+) as cofactor.

Functionally, negatively regulates transcription of bacterial ribonucleotide reductase nrd genes and operons by binding to NrdR-boxes. This chain is Transcriptional repressor NrdR, found in Pseudomonas putida (strain W619).